Here is a 373-residue protein sequence, read N- to C-terminus: D-alanine--D-alanine ligase (373 aa).

An ATP-grasp domain is found at 156–363 (KKLWSAAGLP…YPTLLATMVE (208 aa)). 184–239 (LQRLGLPAYVKPARGGSSIGVSRVSSFDELPAAIAAARRHDPKVIVEAAINGRELE) lines the ATP pocket. Mg(2+)-binding residues include Asp318, Glu330, and Asn332.

It belongs to the D-alanine--D-alanine ligase family. It depends on Mg(2+) as a cofactor. Requires Mn(2+) as cofactor.

The protein resides in the cytoplasm. It carries out the reaction 2 D-alanine + ATP = D-alanyl-D-alanine + ADP + phosphate + H(+). It functions in the pathway cell wall biogenesis; peptidoglycan biosynthesis. In terms of biological role, cell wall formation. The protein is D-alanine--D-alanine ligase of Mycobacterium ulcerans (strain Agy99).